A 546-amino-acid polypeptide reads, in one-letter code: Chaperonin GroEL (546 aa).

ATP contacts are provided by residues 30 to 33 (TLGP), lysine 51, 87 to 91 (DGTTT), glycine 415, 479 to 481 (NAA), and aspartate 495. Residues 527 to 546 (DESAAPAMPGGMGGMGDMGM) form a disordered region. Positions 536 to 546 (GGMGGMGDMGM) are enriched in gly residues.

This sequence belongs to the chaperonin (HSP60) family. In terms of assembly, forms a cylinder of 14 subunits composed of two heptameric rings stacked back-to-back. Interacts with the co-chaperonin GroES.

It localises to the cytoplasm. The enzyme catalyses ATP + H2O + a folded polypeptide = ADP + phosphate + an unfolded polypeptide.. Functionally, together with its co-chaperonin GroES, plays an essential role in assisting protein folding. The GroEL-GroES system forms a nano-cage that allows encapsulation of the non-native substrate proteins and provides a physical environment optimized to promote and accelerate protein folding. This is Chaperonin GroEL from Acidovorax ebreus (strain TPSY) (Diaphorobacter sp. (strain TPSY)).